The sequence spans 333 residues: tRNA(Ile)-lysidine synthase (333 aa).

Position 33-38 (33-38 (SGGADS)) interacts with ATP.

Belongs to the tRNA(Ile)-lysidine synthase family.

The protein resides in the cytoplasm. It catalyses the reaction cytidine(34) in tRNA(Ile2) + L-lysine + ATP = lysidine(34) in tRNA(Ile2) + AMP + diphosphate + H(+). In terms of biological role, ligates lysine onto the cytidine present at position 34 of the AUA codon-specific tRNA(Ile) that contains the anticodon CAU, in an ATP-dependent manner. Cytidine is converted to lysidine, thus changing the amino acid specificity of the tRNA from methionine to isoleucine. This chain is tRNA(Ile)-lysidine synthase, found in Salinispora tropica (strain ATCC BAA-916 / DSM 44818 / JCM 13857 / NBRC 105044 / CNB-440).